The chain runs to 749 residues: 5-methyltetrahydropteroyltriglutamate--homocysteine methyltransferase (749 aa).

5-methyltetrahydropteroyltri-L-glutamate-binding positions include Arg-15–Lys-18 and Lys-114. L-homocysteine is bound by residues Ile-425–Ser-427 and Glu-478. Residues Ile-425 to Ser-427 and Glu-478 each bind L-methionine. Position 555 (Trp-555) interacts with 5-methyltetrahydropteroyltri-L-glutamate. Residue Asp-593 coordinates L-homocysteine. Asp-593 serves as a coordination point for L-methionine. Glu-599 contributes to the 5-methyltetrahydropteroyltri-L-glutamate binding site. 3 residues coordinate Zn(2+): His-636, Cys-638, and Glu-660. His-689 acts as the Proton donor in catalysis. Cys-721 is a binding site for Zn(2+).

The protein belongs to the vitamin-B12 independent methionine synthase family. Zn(2+) is required as a cofactor.

The catalysed reaction is 5-methyltetrahydropteroyltri-L-glutamate + L-homocysteine = tetrahydropteroyltri-L-glutamate + L-methionine. The protein operates within amino-acid biosynthesis; L-methionine biosynthesis via de novo pathway; L-methionine from L-homocysteine (MetE route): step 1/1. In terms of biological role, catalyzes the transfer of a methyl group from 5-methyltetrahydrofolate to homocysteine resulting in methionine formation. This is 5-methyltetrahydropteroyltriglutamate--homocysteine methyltransferase from Streptococcus pneumoniae serotype 2 (strain D39 / NCTC 7466).